The chain runs to 38 residues: uncharacterized protein (38 aa).

This is an uncharacterized protein from Saccharomyces cerevisiae (strain ATCC 204508 / S288c) (Baker's yeast).